A 707-amino-acid polypeptide reads, in one-letter code: Potassium-transporting ATPase ATP-binding subunit (707 aa).

The segment covering 1–11 (MNTDTQKHEDA) has biased composition (basic and acidic residues). The tract at residues 1–37 (MNTDTQKHEDAMSTTTPARAPHDDAPSGQQPGQGRVG) is disordered. 4 helical membrane passes run 61–81 (VMAK…TTAF), 89–109 (WFGW…NLAE), 238–258 (IALN…CATL), and 271–291 (MIVL…ALLS). The active-site 4-aspartylphosphate intermediate is D326. Residues D363, E367, 397–404 (FTAQTRMS), and K415 contribute to the ATP site. Residues D542 and D546 each coordinate Mg(2+). 3 helical membrane-spanning segments follow: residues 612–632 (FAII…LNIM), 640–660 (AILS…PLAL), and 683–703 (LGGL…VSLI).

It belongs to the cation transport ATPase (P-type) (TC 3.A.3) family. Type IA subfamily. As to quaternary structure, the system is composed of three essential subunits: KdpA, KdpB and KdpC.

The protein resides in the cell membrane. The catalysed reaction is K(+)(out) + ATP + H2O = K(+)(in) + ADP + phosphate + H(+). In terms of biological role, part of the high-affinity ATP-driven potassium transport (or Kdp) system, which catalyzes the hydrolysis of ATP coupled with the electrogenic transport of potassium into the cytoplasm. This subunit is responsible for energy coupling to the transport system and for the release of the potassium ions to the cytoplasm. In Streptomyces coelicolor (strain ATCC BAA-471 / A3(2) / M145), this protein is Potassium-transporting ATPase ATP-binding subunit.